The primary structure comprises 458 residues: tRNA modification GTPase MnmE (458 aa).

3 residues coordinate (6S)-5-formyl-5,6,7,8-tetrahydrofolate: Arg-26, Glu-88, and Arg-127. The TrmE-type G domain occupies 224–378 (GLSTAIIGRP…IEERINDIFF (155 aa)). A K(+)-binding site is contributed by Asn-234. GTP-binding positions include 234–239 (NVGKSS), 253–259 (TDIEGTT), and 278–281 (DTAG). Ser-238 is a Mg(2+) binding site. K(+) contacts are provided by Thr-253, Ile-255, and Thr-258. A Mg(2+)-binding site is contributed by Thr-259. Position 458 (Lys-458) interacts with (6S)-5-formyl-5,6,7,8-tetrahydrofolate.

It belongs to the TRAFAC class TrmE-Era-EngA-EngB-Septin-like GTPase superfamily. TrmE GTPase family. As to quaternary structure, homodimer. Heterotetramer of two MnmE and two MnmG subunits. The cofactor is K(+).

It is found in the cytoplasm. In terms of biological role, exhibits a very high intrinsic GTPase hydrolysis rate. Involved in the addition of a carboxymethylaminomethyl (cmnm) group at the wobble position (U34) of certain tRNAs, forming tRNA-cmnm(5)s(2)U34. The polypeptide is tRNA modification GTPase MnmE (Streptococcus agalactiae serotype III (strain NEM316)).